A 353-amino-acid chain; its full sequence is Inactive ubiquitin thioesterase OTULINL (353 aa).

Residues 1–80 (MEAPRSAPRE…KWWIGYLQRK (80 aa)) are required for membrane binding. One can recognise an OTU domain in the interval 125-353 (KCVRAVKRDN…NGHHYHIPVF (229 aa)).

This sequence belongs to the peptidase C65 family. Otulin subfamily. Does not bind ubiquitin or ubiquitin-like proteins.

The protein resides in the cytoplasm. Its subcellular location is the endoplasmic reticulum membrane. It is found in the nucleus envelope. Functionally, lacks deubiquitinase activity. The sequence is that of Inactive ubiquitin thioesterase OTULINL from Mus musculus (Mouse).